The sequence spans 293 residues: MKTVNILVEALPYIKKFHRKKIMIKYGGHAMIDEAAMDSTARDTVLLKYVGMEPVVVHGGGPEISRAMNKMGKEPKFIEGLRVTDEETMEIVKMVLVGKINTSIVSKICYHGGRAIGLSGKDSNLLLARKRAPHVVRDDETGERREIDLGLVGEIESVDPGIINMLTDNNYIPVISPIGVDRDANTLNLNADTVAGEVAAGIGAEKLIVLTDVPGILEDPSDPDTLIRRISVDELSDLVKSGIVEGGMLPKTLTCIQAINDGVSSAHIIDGRVEHSLLLEIFTKKGIGTMITE.

Substrate-binding positions include 60–61 (GG), Arg82, and Asn188.

It belongs to the acetylglutamate kinase family. ArgB subfamily.

The protein localises to the cytoplasm. It carries out the reaction N-acetyl-L-glutamate + ATP = N-acetyl-L-glutamyl 5-phosphate + ADP. It participates in amino-acid biosynthesis; L-arginine biosynthesis; N(2)-acetyl-L-ornithine from L-glutamate: step 2/4. Catalyzes the ATP-dependent phosphorylation of N-acetyl-L-glutamate. The polypeptide is Acetylglutamate kinase (Methanothermobacter thermautotrophicus (strain ATCC 29096 / DSM 1053 / JCM 10044 / NBRC 100330 / Delta H) (Methanobacterium thermoautotrophicum)).